We begin with the raw amino-acid sequence, 603 residues long: Zinc finger protein 415 (603 aa).

The segment at 264-286 (YRYIECDKALNHGSHMTVRQVSH) adopts a C2H2-type 1; degenerate zinc-finger fold. C2H2-type zinc fingers lie at residues 292–314 (YKCD…WRVH), 320–342 (YKCN…RRVH), 348–370 (YKCY…QKTH), 376–398 (YTCK…QVIH), 404–426 (YKCN…QRIH), 432–454 (YKCN…WRIH), 460–482 (YKCN…RRVH), 488–510 (YKCN…QVIH), 516–538 (YKCN…QVIH), 544–566 (YKCN…QIIH), and 572–594 (YKCS…QIIH).

Expressed in all tissues examined. Isoforms are differentially expressed. Isoform 3 and isoform 5 were highly expressed, isoform 4 moderately expressed, isoform 2 lower expression, the lowest expression level was seem with isoform 1.

Its subcellular location is the nucleus. It localises to the cytoplasm. Functionally, involved in transcriptional regulation. Transcriptional activity differed among the various isoforms. All isoforms except isoform 3 seem to suppresses the transcriptional activities of AP-1 and p53/TP53. The sequence is that of Zinc finger protein 415 (ZNF415) from Homo sapiens (Human).